The primary structure comprises 341 residues: Phenylalanine--tRNA ligase alpha subunit (341 aa).

Glutamate 254 serves as a coordination point for Mg(2+).

The protein belongs to the class-II aminoacyl-tRNA synthetase family. Phe-tRNA synthetase alpha subunit type 1 subfamily. As to quaternary structure, tetramer of two alpha and two beta subunits. Mg(2+) is required as a cofactor.

The protein localises to the cytoplasm. It carries out the reaction tRNA(Phe) + L-phenylalanine + ATP = L-phenylalanyl-tRNA(Phe) + AMP + diphosphate + H(+). This chain is Phenylalanine--tRNA ligase alpha subunit, found in Chlorobium phaeovibrioides (strain DSM 265 / 1930) (Prosthecochloris vibrioformis (strain DSM 265)).